The chain runs to 536 residues: Xylulose kinase (536 aa).

Residues His99, Arg170, Asp280, and Asn281 each coordinate substrate. ATP contacts are provided by residues Trp355, 441–442 (GA), and Asn445.

This sequence belongs to the FGGY kinase family. Monomer.

It catalyses the reaction D-xylulose + ATP = D-xylulose 5-phosphate + ADP + H(+). Functionally, phosphorylates D-xylulose to produce D-xylulose 5-phosphate, a molecule that may play an important role in the regulation of glucose metabolism and lipogenesis. This Rattus norvegicus (Rat) protein is Xylulose kinase (Xylb).